Reading from the N-terminus, the 177-residue chain is Large ribosomal subunit protein uL6 (177 aa).

This sequence belongs to the universal ribosomal protein uL6 family. As to quaternary structure, part of the 50S ribosomal subunit.

This protein binds to the 23S rRNA, and is important in its secondary structure. It is located near the subunit interface in the base of the L7/L12 stalk, and near the tRNA binding site of the peptidyltransferase center. In Cupriavidus taiwanensis (strain DSM 17343 / BCRC 17206 / CCUG 44338 / CIP 107171 / LMG 19424 / R1) (Ralstonia taiwanensis (strain LMG 19424)), this protein is Large ribosomal subunit protein uL6.